Here is a 389-residue protein sequence, read N- to C-terminus: Large envelope protein (389 aa).

Met1 bears the N-acetylmethionine mark. Gly2 is lipidated: N-myristoyl glycine; by host. Residues 2–108 (GTNLSVPNPL…PPLRDSHPQA (107 aa)) form a pre-S1 region. The pre-S stretch occupies residues 2–163 (GTNLSVPNPL…FSRTGDPAPN (162 aa)). Residues 2–170 (GTNLSVPNPL…APNMESTTSG (169 aa)) are Virion surface; in external conformation-facing. Residues 2-242 (GTNLSVPNPL…PGYRWMCLRR (241 aa)) are Intravirion; in internal conformation-facing. The interval 74 to 105 (LTTVPAAPPPASTNRQSGRQPTPISPPLRDSH) is disordered. Over residues 85–95 (STNRQSGRQPT) the composition is skewed to polar residues. Residues 109-163 (MQWNSTTFHQALLDPRVRGLYFPAGGSSSGTVNPVPTIVSPISSIFSRTGDPAPN) are pre-S2. A helical membrane pass occupies residues 171–191 (FLGPLLVLQAGFFLLTRILTI). Residues 192–242 (PQSLDSWWTSLNFLGEAPTCPGQNSQSPTSNHSPTSCPPICPGYRWMCLRR) lie on the Intravirion; in external conformation side of the membrane. A helical transmembrane segment spans residues 243–263 (FIIFLFILLLCLIFLLVLLDY). Topologically, residues 264 to 337 (QGMLPVCPLL…WASVRFSWLS (74 aa)) are virion surface. Asn309 carries an N-linked (GlcNAc...) asparagine; by host glycan. Residues 338-358 (LLVPFVQWFAGLSPTVWLSVI) traverse the membrane as a helical segment. Over 359 to 364 (WMMWYW) the chain is Intravirion. Residues 365-387 (GPSLYNILSPFLPLLPIFFCLWV) traverse the membrane as a helical segment. The Virion surface portion of the chain corresponds to 388–389 (YI).

This sequence belongs to the orthohepadnavirus major surface antigen family. In its internal form (Li-HBsAg), interacts with the capsid protein and with the isoform S. Interacts with host chaperone CANX. As to quaternary structure, associates with host chaperone CANX through its pre-S2 N glycan; this association may be essential for isoform M proper secretion. In terms of assembly, interacts with isoform L. Interacts with the antigens of satellite virus HDV (HDVAgs); this interaction is required for encapsidation of HDV genomic RNA. Post-translationally, isoform M is N-terminally acetylated by host at a ratio of 90%, and N-glycosylated by host at the pre-S2 region. In terms of processing, myristoylated.

It is found in the virion membrane. The large envelope protein exists in two topological conformations, one which is termed 'external' or Le-HBsAg and the other 'internal' or Li-HBsAg. In its external conformation the protein attaches the virus to cell receptors and thereby initiating infection. This interaction determines the species specificity and liver tropism. This attachment induces virion internalization predominantly through caveolin-mediated endocytosis. The large envelope protein also assures fusion between virion membrane and endosomal membrane. In its internal conformation the protein plays a role in virion morphogenesis and mediates the contact with the nucleocapsid like a matrix protein. Its function is as follows. The middle envelope protein plays an important role in the budding of the virion. It is involved in the induction of budding in a nucleocapsid independent way. In this process the majority of envelope proteins bud to form subviral lipoprotein particles of 22 nm of diameter that do not contain a nucleocapsid. The polypeptide is Large envelope protein (Hepatitis B virus genotype C subtype adr (isolate Japan/A4/1994) (HBV-C)).